The chain runs to 449 residues: Tubulin alpha chain (449 aa).

Gln-11 is a binding site for GTP. At Lys-40 the chain carries N6-acetyllysine. GTP-binding residues include Glu-71, Ser-140, Gly-144, Thr-145, Thr-179, Asn-206, and Asn-228. Glu-71 serves as a coordination point for Mg(2+). Glu-254 is an active-site residue.

It belongs to the tubulin family. In terms of assembly, dimer of alpha and beta chains. A typical microtubule is a hollow water-filled tube with an outer diameter of 25 nm and an inner diameter of 15 nM. Alpha-beta heterodimers associate head-to-tail to form protofilaments running lengthwise along the microtubule wall with the beta-tubulin subunit facing the microtubule plus end conferring a structural polarity. Microtubules usually have 13 protofilaments but different protofilament numbers can be found in some organisms and specialized cells. Requires Mg(2+) as cofactor. Post-translationally, undergoes a tyrosination/detyrosination cycle, the cyclic removal and re-addition of a C-terminal tyrosine residue by the enzymes tubulin tyrosine carboxypeptidase (TTCP) and tubulin tyrosine ligase (TTL), respectively. Acetylation of alpha chains at Lys-40 stabilizes microtubules and affects affinity and processivity of microtubule motors. This modification has a role in multiple cellular functions, ranging from cell motility, cell cycle progression or cell differentiation to intracellular trafficking and signaling.

It is found in the cytoplasm. It localises to the cytoskeleton. The enzyme catalyses GTP + H2O = GDP + phosphate + H(+). Functionally, tubulin is the major constituent of microtubules, a cylinder consisting of laterally associated linear protofilaments composed of alpha- and beta-tubulin heterodimers. Microtubules grow by the addition of GTP-tubulin dimers to the microtubule end, where a stabilizing cap forms. Below the cap, tubulin dimers are in GDP-bound state, owing to GTPase activity of alpha-tubulin. The sequence is that of Tubulin alpha chain from Tetrahymena pyriformis.